The following is an 893-amino-acid chain: MTDVTVKALAAERQVSVDRLVQQFADAGIRKSADDSVSAQEKQTLLAHLNREAGSGPDKLTLQRKTRSTLNIPGTGGKSKSVQIEVRKKRTFVKRDPQEAERLAAEEQAQREAEEQARREAEEQAKREAQQKAEREAAEQAKREAAEKAKREAAEKDKVSNQQTDDMTKTAQAEKARRENEAAELKRKAEEEARRKLEEEARRVAEEARRMAEENKWTATPEPVEDTSDYHVTTSQHARQAEDESDREVEGGRGRGRNAKAARPAKKGNKHAESKADREEARAAVRGGKGGKRKGSSLQQGFQKPVQAVNRDVVIGETITVGELANKMAVKGSQVIKAMMKLGAMATINQVIDQETAQLVAEEMGHKVILRRENELEEAVMSDRDTGAAAEPRAPVVTIMGHVDHGKTSLLDYIRSTKVASGEAGGITQHIGAYHVETDNGMITFLDTPGHAAFTSMRARGAQATDIVVLVVAADDGVMPQTIEAIQHAKAAGVPVVVAVNKIDKPEADPDRVKNELSQYGILPEEWGGESQFVHVSAKAGTGIDELLDAILLQAEVLELKAVRKGMASGAVIESFLDKGRGPVATVLVREGTLHKGDIVLCGFEYGRVRAMRNELGQEVLEAGPSIPVEILGLSGVPAAGDEVTVVRDEKKAREVALYRQGKFREVKLARQQKSKLENMFANMTEGEVHEVNIVLKADVQGSVEAISDSLLKLSTDEVKVKIIGSGVGGITETDATLAAASNAILVGFNVRADASARKVIESESLDLRYYSVIYNLIDEVKAAMSGMLSPELKQQIIGLAEVRDVFKSPKFGAIAGCMVTEGVVKRHNPIRVLRDNVVIYEGELESLRRFKDDVNEVRNGMECGIGVKNYNDVRAGDMIEVFEIIEIQRTIA.

Positions 49 to 303 (LNREAGSGPD…KGSSLQQGFQ (255 aa)) are disordered. Residues 68–82 (STLNIPGTGGKSKSV) are compositionally biased toward polar residues. Basic and acidic residues-rich tracts occupy residues 93-159 (VKRD…KDKV) and 166-216 (DMTK…EENK). The span at 254–269 (GRGRNAKAARPAKKGN) shows a compositional bias: basic residues. Basic and acidic residues predominate over residues 270-283 (KHAESKADREEARA). Positions 392–561 (PRAPVVTIMG…LLQAEVLELK (170 aa)) constitute a tr-type G domain. A G1 region spans residues 401 to 408 (GHVDHGKT). Position 401-408 (401-408 (GHVDHGKT)) interacts with GTP. Residues 426–430 (GITQH) are G2. The tract at residues 447-450 (DTPG) is G3. Residues 447-451 (DTPGH) and 501-504 (NKID) each bind GTP. The tract at residues 501–504 (NKID) is G4. Residues 537-539 (SAK) form a G5 region.

The protein belongs to the TRAFAC class translation factor GTPase superfamily. Classic translation factor GTPase family. IF-2 subfamily.

Its subcellular location is the cytoplasm. In terms of biological role, one of the essential components for the initiation of protein synthesis. Protects formylmethionyl-tRNA from spontaneous hydrolysis and promotes its binding to the 30S ribosomal subunits. Also involved in the hydrolysis of GTP during the formation of the 70S ribosomal complex. The protein is Translation initiation factor IF-2 of Salmonella arizonae (strain ATCC BAA-731 / CDC346-86 / RSK2980).